A 373-amino-acid polypeptide reads, in one-letter code: Queuine tRNA-ribosyltransferase (373 aa).

Asp93 acts as the Proton acceptor in catalysis. Substrate is bound by residues 93-97 (DSGGF), Asp147, Gln191, and Gly218. Residues 249 to 255 (GVGAPRD) form an RNA binding region. Asp268 (nucleophile) is an active-site residue. Residues 273 to 277 (TRNAR) form an RNA binding; important for wobble base 34 recognition region. Zn(2+) is bound by residues Cys306, Cys308, Cys311, and His337.

The protein belongs to the queuine tRNA-ribosyltransferase family. In terms of assembly, homodimer. Within each dimer, one monomer is responsible for RNA recognition and catalysis, while the other monomer binds to the replacement base PreQ1. Requires Zn(2+) as cofactor.

The enzyme catalyses 7-aminomethyl-7-carbaguanine + guanosine(34) in tRNA = 7-aminomethyl-7-carbaguanosine(34) in tRNA + guanine. It functions in the pathway tRNA modification; tRNA-queuosine biosynthesis. Catalyzes the base-exchange of a guanine (G) residue with the queuine precursor 7-aminomethyl-7-deazaguanine (PreQ1) at position 34 (anticodon wobble position) in tRNAs with GU(N) anticodons (tRNA-Asp, -Asn, -His and -Tyr). Catalysis occurs through a double-displacement mechanism. The nucleophile active site attacks the C1' of nucleotide 34 to detach the guanine base from the RNA, forming a covalent enzyme-RNA intermediate. The proton acceptor active site deprotonates the incoming PreQ1, allowing a nucleophilic attack on the C1' of the ribose to form the product. After dissociation, two additional enzymatic reactions on the tRNA convert PreQ1 to queuine (Q), resulting in the hypermodified nucleoside queuosine (7-(((4,5-cis-dihydroxy-2-cyclopenten-1-yl)amino)methyl)-7-deazaguanosine). The protein is Queuine tRNA-ribosyltransferase of Solidesulfovibrio magneticus (strain ATCC 700980 / DSM 13731 / RS-1) (Desulfovibrio magneticus).